The following is a 1204-amino-acid chain: Cingulin (1204 aa).

Residues methionine 7–alanine 357 are head. Residues glutamate 25–alanine 48 form a disordered region. Residues alanine 48–glycine 62 carry the ZIM motif. Positions alanine 54–valine 67 are interaction with TJP1/ZO1. Disordered regions lie at residues leucine 68–proline 174 and aspartate 186–alanine 266. Residues alanine 93–threonine 119 show a composition bias toward polar residues. Phosphoserine occurs at positions 95, 96, 98, 135, 137, 140, 155, 165, 214, and 217. The span at glutamate 207–serine 231 shows a compositional bias: basic and acidic residues. Positions threonine 232–valine 245 are enriched in polar residues. Over residues serine 247–serine 261 the composition is skewed to low complexity. Phosphoserine occurs at positions 258, 276, 338, and 351. A coiled-coil region spans residues methionine 358–alanine 1161. The tract at residues valine 379–glutamate 398 is disordered. Lysine 579 is modified (N6-acetyllysine). The tract at residues alanine 1161–aspartate 1182 is disordered. Residues serine 1162–cysteine 1204 are tail. A phosphoserine mark is found at serine 1176, serine 1177, and serine 1183.

Belongs to the cingulin family. In terms of assembly, homodimer. Interacts with TJP1/ZO1 and SPEF1.

It is found in the cell junction. The protein localises to the tight junction. In terms of biological role, probably plays a role in the formation and regulation of the tight junction (TJ) paracellular permeability barrier. In Plecturocebus moloch (Dusky titi monkey), this protein is Cingulin.